A 266-amino-acid chain; its full sequence is Amylovoran biosynthesis glycosyltransferase AmsE (266 aa).

The protein belongs to the glycosyltransferase 2 family.

It participates in glycan metabolism; exopolysaccharide biosynthesis. In terms of biological role, involved in the biosynthesis of amylovoran which functions as a virulence factor. This chain is Amylovoran biosynthesis glycosyltransferase AmsE (amsE), found in Erwinia amylovora (Fire blight bacteria).